The sequence spans 546 residues: Chaperonin GroEL (546 aa).

Residues 30 to 33 (TLGP), lysine 51, 87 to 91 (DGTTT), glycine 415, and aspartate 496 each bind ATP. Positions 526–546 (PEPKSAPAGGMGGMGGMDGMM) are disordered. Gly residues predominate over residues 534–546 (GGMGGMGGMDGMM).

The protein belongs to the chaperonin (HSP60) family. In terms of assembly, forms a cylinder of 14 subunits composed of two heptameric rings stacked back-to-back. Interacts with the co-chaperonin GroES.

The protein resides in the cytoplasm. It catalyses the reaction ATP + H2O + a folded polypeptide = ADP + phosphate + an unfolded polypeptide.. Functionally, together with its co-chaperonin GroES, plays an essential role in assisting protein folding. The GroEL-GroES system forms a nano-cage that allows encapsulation of the non-native substrate proteins and provides a physical environment optimized to promote and accelerate protein folding. This is Chaperonin GroEL from Rhodopseudomonas palustris.